A 72-amino-acid chain; its full sequence is DNA-directed RNA polymerase subunit omega (72 aa).

It belongs to the RNA polymerase subunit omega family. The RNAP catalytic core consists of 2 alpha, 1 beta, 1 beta' and 1 omega subunit. When a sigma factor is associated with the core the holoenzyme is formed, which can initiate transcription.

The enzyme catalyses RNA(n) + a ribonucleoside 5'-triphosphate = RNA(n+1) + diphosphate. Functionally, promotes RNA polymerase assembly. Latches the N- and C-terminal regions of the beta' subunit thereby facilitating its interaction with the beta and alpha subunits. The sequence is that of DNA-directed RNA polymerase subunit omega from Clostridium acetobutylicum (strain ATCC 824 / DSM 792 / JCM 1419 / IAM 19013 / LMG 5710 / NBRC 13948 / NRRL B-527 / VKM B-1787 / 2291 / W).